Consider the following 410-residue polypeptide: Putative transposase Rv3428c (410 aa).

The 181-residue stretch at 40–220 folds into the Integrase catalytic domain; that stretch reads VPRGPVDAGS…QPLRMFEAVE (181 aa). The disordered stretch occupies residues 390 to 410; the sequence is AANEPTTSSPASTAGGVPARP.

The protein belongs to the transposase IS21/IS408/IS1162 family.

The polypeptide is Putative transposase Rv3428c (Mycobacterium tuberculosis (strain ATCC 25618 / H37Rv)).